A 370-amino-acid chain; its full sequence is Pulmonary surfactant-associated protein B (370 aa).

The signal sequence occupies residues 1–24; the sequence is MAKSHLPPWLLLLLLPTLCGPGTA. Positions 25-184 are excised as a propeptide; that stretch reads VWATSPLACA…PHTQDLSAQR (160 aa). A Saposin A-type domain is found at 26–66; sequence WATSPLACAQGPEFWCQSLEQALQCKALGHCLQEVWGHVGA. Saposin B-type domains are found at residues 66-148, 188-265, and 284-359; these read ADDL…QPGS, PLPL…SSVD, and QDPE…VATL. Disulfide bonds link Cys70–Cys144, Cys73–Cys138, Cys101–Cys113, Cys192–Cys261, Cys195–Cys255, Cys219–Cys230, Cys288–Cys355, Cys291–Cys349, and Cys314–Cys324. Positions 264 to 370 are excised as a propeptide; that stretch reads VDSIGQVPPT…PLQCIQSPHF (107 aa). Asn300 carries an N-linked (GlcNAc...) asparagine glycan.

As to quaternary structure, homodimer; disulfide-linked.

The protein resides in the secreted. Its subcellular location is the extracellular space. It is found in the surface film. Pulmonary surfactant-associated proteins promote alveolar stability by lowering the surface tension at the air-liquid interface in the peripheral air spaces. SP-B increases the collapse pressure of palmitic acid to nearly 70 millinewtons per meter. This is Pulmonary surfactant-associated protein B (SFTPB) from Oryctolagus cuniculus (Rabbit).